Consider the following 349-residue polypeptide: Protein RecA (349 aa).

Position 64-71 (64-71 (GPESSGKT)) interacts with ATP. The segment at 328–349 (NGEIEVEAPSEEEFEDLPLDLK) is disordered. A compositionally biased stretch (acidic residues) spans 331–349 (IEVEAPSEEEFEDLPLDLK).

It belongs to the RecA family.

The protein resides in the cytoplasm. Functionally, can catalyze the hydrolysis of ATP in the presence of single-stranded DNA, the ATP-dependent uptake of single-stranded DNA by duplex DNA, and the ATP-dependent hybridization of homologous single-stranded DNAs. It interacts with LexA causing its activation and leading to its autocatalytic cleavage. In Halalkalibacterium halodurans (strain ATCC BAA-125 / DSM 18197 / FERM 7344 / JCM 9153 / C-125) (Bacillus halodurans), this protein is Protein RecA.